Here is a 333-residue protein sequence, read N- to C-terminus: Fatty acid hydroxylase domain-containing protein 2 (333 aa).

6 helical membrane-spanning segments follow: residues 29 to 49 (FILG…TWHL), 77 to 97 (ILFF…FNGL), 134 to 154 (TVLF…YPFL), 168 to 188 (FHWF…LFYY), 215 to 235 (VISL…PAIV), and 237 to 257 (PLVM…ALII). In terms of domain architecture, Fatty acid hydroxylase spans 176-299 (AIFTLIEEVL…LGVLDHLHGT (124 aa)).

It belongs to the sterol desaturase family.

The protein localises to the cytoplasm. It is found in the membrane. In terms of biological role, promotes megakaryocyte differentiation by enhancing ERK phosphorylation and up-regulating RUNX1 expression. The sequence is that of Fatty acid hydroxylase domain-containing protein 2 (FAXDC2) from Macaca fascicularis (Crab-eating macaque).